Reading from the N-terminus, the 239-residue chain is tRNA (guanine-N(1)-)-methyltransferase (239 aa).

S-adenosyl-L-methionine-binding positions include Gly-108 and 127–132 (LGDFVL).

Belongs to the RNA methyltransferase TrmD family. Homodimer.

The protein resides in the cytoplasm. The catalysed reaction is guanosine(37) in tRNA + S-adenosyl-L-methionine = N(1)-methylguanosine(37) in tRNA + S-adenosyl-L-homocysteine + H(+). Functionally, specifically methylates guanosine-37 in various tRNAs. This Streptococcus thermophilus (strain CNRZ 1066) protein is tRNA (guanine-N(1)-)-methyltransferase.